The chain runs to 473 residues: H(+)/Cl(-) exchange transporter ClcA (473 aa).

Over 1–32 the chain is Cytoplasmic; it reads MKTDTPSLETPQAARLRRRQLIRQLLERDKTP. The helical transmembrane segment at 33–69 threads the bilayer; sequence LAILFMAAVVGTLVGLAAVAFDKGVAWLQNQRMGALV. Residues 70–76 lie on the Periplasmic side of the membrane; the sequence is HTADNYP. A helical transmembrane segment spans residues 77-100; the sequence is LLLTVAFLCSAVLAMFGYFLVRKY. A Selectivity filter part_1 motif is present at residues 106–110; that stretch reads GSGIP. Residue S107 participates in chloride binding. Residues 109-116 constitute an intramembrane region (helical); that stretch reads IPEIEGAL. The Cytoplasmic portion of the chain corresponds to 117–123; sequence EDQRPVR. The next 2 helical transmembrane spans lie at 124–141 and 148–166; these read WWRV…TLGG and EGPT…LDIF. The short motif at 146–150 is the Selectivity filter part_2 element; that stretch reads GREGP. Topologically, residues 167–176 are cytoplasmic; sequence RLKGDEARHT. 2 consecutive intramembrane regions (helical) follow at residues 177-189 and 193-201; these read LLAT…LAAA and PLAGILFII. Residues 202 to 214 are Cytoplasmic-facing; that stretch reads EEMRPQFRYTLIS. The chain crosses the membrane as a helical span at residues 215-232; that stretch reads IKAVFIGVIMSTIMYRIF. Residues 233-252 are Periplasmic-facing; it reads NHEVALIDVGKLSDAPLNTQ. A helical membrane pass occupies residues 253–281; it reads WLYLILGIIFGIFGPIFNKWVLGMQDLLH. The Cytoplasmic portion of the chain corresponds to 282 to 287; the sequence is RVHGGN. A helical transmembrane segment spans residues 288–309; it reads ITKWVLMGGAIGGLCGLLGFVA. Residues 310–329 are Periplasmic-facing; the sequence is PATSGGGFNLIPIATAGNFS. The next 2 membrane-spanning stretches (helical) occupy residues 330-349 and 355-376; these read MGML…LCFS and GIFA…MVVV. A Selectivity filter part_3 motif is present at residues 355 to 359; it reads GIFAP. Residues I356 and F357 each contribute to the chloride site. The Periplasmic segment spans residues 377–386; the sequence is ELFPQYHLEA. The segment at residues 387–401 is an intramembrane region (helical); that stretch reads GTFAIAGMGALLAAS. Positions 402–404 form an intramembrane region, note=Loop between two helices; that stretch reads IRA. The segment at residues 405-416 is an intramembrane region (helical); the sequence is PLTGIILVLEMT. Residues 417–421 constitute an intramembrane region (note=Loop between two helices); it reads DNYQL. The chain crosses the membrane as a helical span at residues 422–438; that stretch reads ILPMIITGLGATLLAQF. The Cytoplasmic segment spans residues 439–473; it reads TGGKPLYSAILARTLAKQEAEQLARSKAASASENT. Residue Y445 participates in chloride binding.

The protein belongs to the chloride channel (TC 2.A.49) family. ClcA subfamily. As to quaternary structure, homodimer.

Its subcellular location is the cell inner membrane. The catalysed reaction is 2 chloride(in) + H(+)(out) = 2 chloride(out) + H(+)(in). In terms of biological role, proton-coupled chloride transporter. Functions as antiport system and exchanges two chloride ions for 1 proton. Probably acts as an electrical shunt for an outwardly-directed proton pump that is linked to amino acid decarboxylation, as part of the extreme acid resistance (XAR) response. The protein is H(+)/Cl(-) exchange transporter ClcA of Shigella boydii serotype 18 (strain CDC 3083-94 / BS512).